The sequence spans 149 residues: Transcription antitermination protein NusB (149 aa).

This sequence belongs to the NusB family.

In terms of biological role, involved in transcription antitermination. Required for transcription of ribosomal RNA (rRNA) genes. Binds specifically to the boxA antiterminator sequence of the ribosomal RNA (rrn) operons. The protein is Transcription antitermination protein NusB of Hahella chejuensis (strain KCTC 2396).